A 143-amino-acid polypeptide reads, in one-letter code: Transcriptional regulator MraZ (143 aa).

2 SpoVT-AbrB domains span residues 5–47 and 76–119; these read EYRH…PQVE and ATEC…SKEL.

It belongs to the MraZ family. Forms oligomers.

It localises to the cytoplasm. The protein resides in the nucleoid. The chain is Transcriptional regulator MraZ from Halalkalibacterium halodurans (strain ATCC BAA-125 / DSM 18197 / FERM 7344 / JCM 9153 / C-125) (Bacillus halodurans).